A 915-amino-acid chain; its full sequence is Probable dipeptidyl-aminopeptidase B (915 aa).

Residues 1–82 are disordered; it reads MAPPFTDDPE…GAFLGPPGVP (82 aa). Residues 1 to 94 lie on the Cytoplasmic side of the membrane; sequence MAPPFTDDPE…RQPMDRGFRR (94 aa). A compositionally biased stretch (low complexity) spans 15–32; it reads STSRLSQDSLSSVSTTSL. Over residues 36–62 the composition is skewed to basic and acidic residues; it reads RIQEEMDRDPSASRSARRDLLPATKDE. Residues 95 to 115 form a helical; Signal-anchor for type II membrane protein membrane-spanning segment; it reads ILIIIGAVFVGAWLAGLGIFV. The Vacuolar portion of the chain corresponds to 116 to 915; it reads LSGSYKHESD…IDTKKRRHVS (800 aa). 2 N-linked (GlcNAc...) asparagine glycosylation sites follow: N355 and N577. The active-site Charge relay system is S760. N-linked (GlcNAc...) asparagine glycosylation occurs at N819. Active-site charge relay system residues include D837 and H870.

The protein belongs to the peptidase S9B family.

The protein resides in the vacuole membrane. It carries out the reaction Release of an N-terminal dipeptide, Xaa-Yaa-|-Zaa-, from a polypeptide, preferentially when Yaa is Pro, provided Zaa is neither Pro nor hydroxyproline.. Its function is as follows. Type IV dipeptidyl-peptidase which removes N-terminal dipeptides sequentially from polypeptides having unsubstituted N-termini provided that the penultimate residue is proline. This is Probable dipeptidyl-aminopeptidase B (DAPB) from Metarhizium robertsii (strain ARSEF 23 / ATCC MYA-3075) (Metarhizium anisopliae (strain ARSEF 23)).